The sequence spans 94 residues: Conotoxin Cal22a (94 aa).

The signal sequence occupies residues 1–24; the sequence is MMSTKGITLFLCLLLLALATSVNG. Positions 25 to 44 are excised as a propeptide; the sequence is GQGTRRSRMTRALHGGRPSA.

In terms of processing, contains 4 disulfide bonds. In terms of tissue distribution, expressed by the venom duct.

It is found in the secreted. In terms of biological role, probable neurotoxin with unknown target. Possibly targets ion channels. The protein is Conotoxin Cal22a of Californiconus californicus (California cone).